The chain runs to 738 residues: Glycogen [starch] synthase, muscle (738 aa).

S8 carries the phosphoserine; by AMPK and PKA modification. A Phosphoserine modification is found at S11. K39 serves as a coordination point for UDP. Positions 205 and 211 each coordinate UDP-alpha-D-glucose. The alpha-D-glucose 6-phosphate site is built by H291, E292, Q294, H297, and K301. R331 is a UDP binding site. A UDP-alpha-D-glucose-binding site is contributed by R331. Position 412 is a phosphoserine (S412). Position 501 (H501) interacts with alpha-D-glucose 6-phosphate. The UDP-alpha-D-glucose site is built by E510, W512, and G513. T515 lines the UDP pocket. 2 residues coordinate alpha-D-glucose 6-phosphate: R582 and R586. Positions 632–738 (QGYRYPRPAS…PTSSLGEERN (107 aa)) are disordered. S641 carries the phosphoserine; by DYRK2, GSK3-alpha, GSK3-beta and PASK modification. A phosphoserine mark is found at S645, S649, S652, S653, S657, and S672. A compositionally biased stretch (acidic residues) spans 658 to 681 (EDEEEPRDGPLGEDSERYDEEEEA). The segment covering 682–695 (AKDRRNIRAPEWPR) has biased composition (basic and acidic residues). Phosphoserine is present on residues S698, S709, and S711. A compositionally biased stretch (low complexity) spans 698–738 (SCSSSTGGSKRSNSVDTGPSSSLSTPTEPLSPTSSLGEERN). T722 and T724 each carry phosphothreonine. 2 positions are modified to phosphoserine: S728 and S732.

It belongs to the glycosyltransferase 3 family. In terms of assembly, part of the GYS1-GYG1 complex, a heterooctamer composed of a tetramer of GYS1 and 2 dimers of GYG1, where each GYS1 protomer binds to one GYG1 subunit (via GYG1 C-terminus); the GYS1 tetramer may dissociate from GYG1 dimers to continue glycogen polymerization on its own. In terms of processing, primed phosphorylation at Ser-657 (site 5) by CSNK2A1 and CSNK2A2 is required for inhibitory phosphorylation at Ser-641 (site 3a), Ser-645 (site 3b), Ser-649 (site 3c) and Ser-653 (site 4) by GSK3A an GSK3B. Phosphorylated at Ser-641 by PASK, leading to inactivation; phosphorylation by PASK is inhibited by glycogen. Phosphorylated at Ser-641 by DYRK2, leading to inactivation. Dephosphorylation at Ser-641 and Ser-645 by PP1 activates the enzyme. Phosphorylation at Ser-8 by AMPK inactivates the enzyme activity.

The catalysed reaction is [(1-&gt;4)-alpha-D-glucosyl](n) + UDP-alpha-D-glucose = [(1-&gt;4)-alpha-D-glucosyl](n+1) + UDP + H(+). Its pathway is glycan biosynthesis; glycogen biosynthesis. With respect to regulation, allosteric activation by glucose-6-phosphate. Phosphorylation reduces the activity towards UDP-glucose. When in the non-phosphorylated state, glycogen synthase does not require glucose-6-phosphate as an allosteric activator; when phosphorylated it does. Functionally, glycogen synthase participates in the glycogen biosynthetic process along with glycogenin and glycogen branching enzyme. Extends the primer composed of a few glucose units formed by glycogenin by adding new glucose units to it. In this context, glycogen synthase transfers the glycosyl residue from UDP-Glc to the non-reducing end of alpha-1,4-glucan. The sequence is that of Glycogen [starch] synthase, muscle (Gys1) from Mus musculus (Mouse).